The following is a 282-amino-acid chain: Bis(5'-nucleosyl)-tetraphosphatase, symmetrical (282 aa).

This sequence belongs to the Ap4A hydrolase family.

The catalysed reaction is P(1),P(4)-bis(5'-adenosyl) tetraphosphate + H2O = 2 ADP + 2 H(+). Hydrolyzes diadenosine 5',5'''-P1,P4-tetraphosphate to yield ADP. This chain is Bis(5'-nucleosyl)-tetraphosphatase, symmetrical, found in Klebsiella pneumoniae subsp. pneumoniae (strain ATCC 700721 / MGH 78578).